Reading from the N-terminus, the 346-residue chain is Phosphoribosylformylglycinamidine cyclo-ligase (346 aa).

This sequence belongs to the AIR synthase family.

The protein resides in the cytoplasm. The catalysed reaction is 2-formamido-N(1)-(5-O-phospho-beta-D-ribosyl)acetamidine + ATP = 5-amino-1-(5-phospho-beta-D-ribosyl)imidazole + ADP + phosphate + H(+). It functions in the pathway purine metabolism; IMP biosynthesis via de novo pathway; 5-amino-1-(5-phospho-D-ribosyl)imidazole from N(2)-formyl-N(1)-(5-phospho-D-ribosyl)glycinamide: step 2/2. This is Phosphoribosylformylglycinamidine cyclo-ligase from Geobacillus sp. (strain WCH70).